A 370-amino-acid polypeptide reads, in one-letter code: 3-isopropylmalate dehydrogenase 2 (370 aa).

77–90 (GPKWDAVPYEVRPE) is an NAD(+) binding site. The substrate site is built by arginine 97, arginine 107, arginine 135, and aspartate 226. Residues aspartate 226, aspartate 250, and aspartate 254 each coordinate Mg(2+). 290–302 (GSAPDIAGKGLAN) is an NAD(+) binding site.

This sequence belongs to the isocitrate and isopropylmalate dehydrogenases family. LeuB type 1 subfamily. In terms of assembly, homodimer. Mg(2+) is required as a cofactor. Requires Mn(2+) as cofactor.

Its subcellular location is the cytoplasm. It carries out the reaction (2R,3S)-3-isopropylmalate + NAD(+) = 4-methyl-2-oxopentanoate + CO2 + NADH. It functions in the pathway amino-acid biosynthesis; L-leucine biosynthesis; L-leucine from 3-methyl-2-oxobutanoate: step 3/4. Functionally, catalyzes the oxidation of 3-carboxy-2-hydroxy-4-methylpentanoate (3-isopropylmalate) to 3-carboxy-4-methyl-2-oxopentanoate. The product decarboxylates to 4-methyl-2 oxopentanoate. The sequence is that of 3-isopropylmalate dehydrogenase 2 from Bradyrhizobium diazoefficiens (strain JCM 10833 / BCRC 13528 / IAM 13628 / NBRC 14792 / USDA 110).